The sequence spans 162 residues: Zinc finger protein 593 homolog (162 aa).

The C2H2-type zinc finger occupies 59–83; that stretch reads FYCVHCAKYFIDDTAMQAHFRTKVH. Positions 110–162 are disordered; sequence VKPKKRAMETQPSKEDVVAGKRIRVEVVPEDTDATDSPSTSKTKRKKVEKMET. The span at 115 to 136 shows a compositional bias: basic and acidic residues; the sequence is RAMETQPSKEDVVAGKRIRVEV. Basic residues predominate over residues 151-162; it reads KTKRKKVEKMET.

This sequence belongs to the ZNF593/BUD20 C2H2-type zinc-finger protein family. In terms of assembly, associates with pre-60S ribosomal particles; released from the pre-60S particle very early in the cytoplasm.

The protein localises to the nucleus. It localises to the cytoplasm. Functionally, involved in pre-60S ribosomal particles maturation by promoting the nuclear export of the 60S ribosome. This chain is Zinc finger protein 593 homolog, found in Drosophila melanogaster (Fruit fly).